A 312-amino-acid chain; its full sequence is Pyrimidine-specific ribonucleoside hydrolase RihA (312 aa).

Residue histidine 240 is part of the active site.

Belongs to the IUNH family. RihA subfamily.

Functionally, hydrolyzes cytidine or uridine to ribose and cytosine or uracil, respectively. The chain is Pyrimidine-specific ribonucleoside hydrolase RihA from Shewanella woodyi (strain ATCC 51908 / MS32).